We begin with the raw amino-acid sequence, 103 residues long: Putative membrane protein insertion efficiency factor (103 aa).

Belongs to the UPF0161 family.

It is found in the cell membrane. Functionally, could be involved in insertion of integral membrane proteins into the membrane. The protein is Putative membrane protein insertion efficiency factor of Clavibacter michiganensis subsp. michiganensis (strain NCPPB 382).